Reading from the N-terminus, the 309-residue chain is Olfactory receptor 10J5 (309 aa).

The Extracellular segment spans residues 1-25 (MKRKNFTEVSEFIFLGFSSFGKHQI). An N-linked (GlcNAc...) asparagine glycan is attached at N5. The helical transmembrane segment at 26–46 (TLFVVFLTVYILTLVANIIIV) threads the bilayer. Residues 47-54 (TIICIDHH) are Cytoplasmic-facing. The helical transmembrane segment at 55–75 (LHTPMYFFLSMLASSETVYTL) threads the bilayer. The Extracellular portion of the chain corresponds to 76 to 99 (VIVPRMLLSLIFHNQPISLAGCAT). An intrachain disulfide couples C97 to C188. A helical transmembrane segment spans residues 100–120 (QMFFFVILATNNCFLLTAMGY). The Cytoplasmic segment spans residues 121 to 139 (DRYVAICRPLRYTVIMSKG). A helical membrane pass occupies residues 140 to 160 (LCAQLVCGSFGIGLTMAVLHV). Residues 161–196 (TAMFNLPFCGTVVDHFFCDIYPVMKLSCIDTTINEI) are Extracellular-facing. The helical transmembrane segment at 197 to 216 (INYGVSSFVIFVPIGLIFIS) threads the bilayer. At 217–236 (YVLVISSILQIASAEGRKKT) the chain is on the cytoplasmic side. The helical transmembrane segment at 237–257 (FATCVSHLTVVIVHCGCASIA) threads the bilayer. Over 258-270 (YLKPKSESSIEKD) the chain is Extracellular. The chain crosses the membrane as a helical span at residues 271–291 (LVLSVTYTIITPLLNPVVYSL). Topologically, residues 292–309 (RNKEVKDALCRVVGRNIS) are cytoplasmic.

It belongs to the G-protein coupled receptor 1 family. As to expression, expressed in both the aorta, the coronary artery and umbilical vein endothelial cells (HUVECs) (at protein level).

The protein resides in the cell membrane. Functionally, olfactory receptor. Activated by the synthetic floral odorant, lyral, and by alpha-cedrene, a sesquiterpene constituent of cedarwood oil. Its activation increases intracellular Ca(2+). Acts as a key regulator of myogenesis through its actions on cell migration and adhesion by activating the Ca(2+)-dependent AKT signal transduction pathway. Also acts as a regulator of angiogenesis. Moreover, plays a role in the regulation of lipid accumulation in hepatocytes via the cAMP-PKA pathway. May be involved in sperm chemotaxis and motility. In Homo sapiens (Human), this protein is Olfactory receptor 10J5.